The chain runs to 498 residues: uncharacterized protein (498 aa).

3 disordered regions span residues 1-48 (MSND…ARPK), 99-134 (NDLHPLDNDSTRTSKTLKNSSEVLTASKLTDEGNSK), and 190-209 (NSENSNVNNGSSLNGNTSSN). Residues 35-44 (ELSTPKQVNQ) are compositionally biased toward polar residues. Positions 99-110 (NDLHPLDNDSTR) are enriched in basic and acidic residues. Polar residues predominate over residues 111-126 (TSKTLKNSSEVLTASK).

This is an uncharacterized protein from Schizosaccharomyces pombe (strain 972 / ATCC 24843) (Fission yeast).